We begin with the raw amino-acid sequence, 376 residues long: Serpin B6 (376 aa).

M1 is subject to N-acetylmethionine. S151 is modified (phosphoserine). K195 is modified (N6-acetyllysine).

It belongs to the serpin family. Ov-serpin subfamily. As to quaternary structure, forms a complex with the monomeric form of beta-tryptase.

The protein resides in the cytoplasm. Its function is as follows. Inhibitor of cathepsin G, kallikrein-8 and thrombin. May play an important role in the inner ear in the protection against leakage of lysosomal content during stress. May be involved in the regulation of serine proteinases present in the brain or extravasated from the blood. The polypeptide is Serpin B6 (SERPINB6) (Macaca fascicularis (Crab-eating macaque)).